The sequence spans 425 residues: Gamma-glutamyl phosphate reductase (425 aa).

This sequence belongs to the gamma-glutamyl phosphate reductase family.

It localises to the cytoplasm. The catalysed reaction is L-glutamate 5-semialdehyde + phosphate + NADP(+) = L-glutamyl 5-phosphate + NADPH + H(+). It functions in the pathway amino-acid biosynthesis; L-proline biosynthesis; L-glutamate 5-semialdehyde from L-glutamate: step 2/2. In terms of biological role, catalyzes the NADPH-dependent reduction of L-glutamate 5-phosphate into L-glutamate 5-semialdehyde and phosphate. The product spontaneously undergoes cyclization to form 1-pyrroline-5-carboxylate. In Xylella fastidiosa (strain M23), this protein is Gamma-glutamyl phosphate reductase.